Consider the following 141-residue polypeptide: Large ribosomal subunit protein uL11 (141 aa).

Belongs to the universal ribosomal protein uL11 family. As to quaternary structure, part of the ribosomal stalk of the 50S ribosomal subunit. Interacts with L10 and the large rRNA to form the base of the stalk. L10 forms an elongated spine to which L12 dimers bind in a sequential fashion forming a multimeric L10(L12)X complex. One or more lysine residues are methylated.

Functionally, forms part of the ribosomal stalk which helps the ribosome interact with GTP-bound translation factors. The polypeptide is Large ribosomal subunit protein uL11 (Ligilactobacillus salivarius (strain UCC118) (Lactobacillus salivarius)).